The chain runs to 475 residues: Ribulose bisphosphate carboxylase large chain (475 aa).

Residues 1–2 (MV) constitute a propeptide that is removed on maturation. Pro-3 carries the N-acetylproline modification. Position 14 is an N6,N6,N6-trimethyllysine (Lys-14). Asn-123 and Thr-173 together coordinate substrate. The active-site Proton acceptor is the Lys-175. Lys-177 serves as a coordination point for substrate. Residues Lys-201, Asp-203, and Glu-204 each contribute to the Mg(2+) site. Residue Lys-201 is modified to N6-carboxylysine. His-294 functions as the Proton acceptor in the catalytic mechanism. Residues Arg-295, His-327, and Ser-379 each contribute to the substrate site.

This sequence belongs to the RuBisCO large chain family. Type I subfamily. In terms of assembly, heterohexadecamer of 8 large chains and 8 small chains. It depends on Mg(2+) as a cofactor.

The protein resides in the plastid. It localises to the chloroplast. It carries out the reaction 2 (2R)-3-phosphoglycerate + 2 H(+) = D-ribulose 1,5-bisphosphate + CO2 + H2O. The catalysed reaction is D-ribulose 1,5-bisphosphate + O2 = 2-phosphoglycolate + (2R)-3-phosphoglycerate + 2 H(+). In terms of biological role, ruBisCO catalyzes two reactions: the carboxylation of D-ribulose 1,5-bisphosphate, the primary event in carbon dioxide fixation, as well as the oxidative fragmentation of the pentose substrate in the photorespiration process. Both reactions occur simultaneously and in competition at the same active site. In Chlamydomonas moewusii (Chlamydomonas eugametos), this protein is Ribulose bisphosphate carboxylase large chain.